Reading from the N-terminus, the 528-residue chain is Probable serine protease HtrA1 (528 aa).

The disordered stretch occupies residues 1 to 70; it reads MDTRVDTDNA…RPSGVQGSFV (70 aa). Over 1–178 the chain is Cytoplasmic; that stretch reads MDTRVDTDNA…DVLFGGKVSY (178 aa). The segment covering 31–40 has biased composition (gly residues); the sequence is NNGGPNGGGR. A helical transmembrane segment spans residues 179-199; that stretch reads LALGILVAIALVIGGIGGVIG. Residues 200 to 528 lie on the Periplasmic side of the membrane; that stretch reads RKTAEVVDAF…LTVKPDPDST (329 aa). Residues His-270, Asp-306, and Ser-387 each act as charge relay system in the active site. The 62-residue stretch at 426-487 folds into the PDZ domain; sequence LVANSLIKDG…VIVKVGNRAV (62 aa).

This sequence belongs to the peptidase S1C family. In terms of assembly, the C-terminal region exhibits both monomeric and trimeric forms in solution.

It is found in the cell inner membrane. It carries out the reaction Acts on substrates that are at least partially unfolded. The cleavage site P1 residue is normally between a pair of hydrophobic residues, such as Val-|-Val.. Its function is as follows. Essential protein that may act as a regulatory protease that is conditionally activated upon appropriate environmental triggers. The chain is Probable serine protease HtrA1 from Mycobacterium tuberculosis (strain ATCC 25618 / H37Rv).